The sequence spans 588 residues: Ribonuclease Y (588 aa).

Residues 7-27 (VLLVAVLLLALIVLGAVLVGV) traverse the membrane as a helical segment. Residues 130 to 162 (ARRSGEREAAVLATTTREQAAEVERRAARMDDR) form a disordered region. The segment covering 148 to 162 (QAAEVERRAARMDDR) has biased composition (basic and acidic residues). The region spanning 278–359 (VVSVLHLPGD…HRIEEVHDLA (82 aa)) is the KH domain. The HD domain occupies 404 to 497 (VLKHLVETAH…TQASDACSGG (94 aa)).

The protein belongs to the RNase Y family.

It is found in the cell membrane. Functionally, endoribonuclease that initiates mRNA decay. The protein is Ribonuclease Y of Salinispora arenicola (strain CNS-205).